We begin with the raw amino-acid sequence, 285 residues long: Dermonecrotic toxin LlSicTox-alphaIII2 (285 aa).

Histidine 12 is an active-site residue. Mg(2+) contacts are provided by glutamate 32 and aspartate 34. Histidine 47 functions as the Nucleophile in the catalytic mechanism. A disulfide bridge connects residues cysteine 51 and cysteine 57. Residue aspartate 91 participates in Mg(2+) binding.

It belongs to the arthropod phospholipase D family. Class I subfamily. It depends on Mg(2+) as a cofactor. In terms of tissue distribution, expressed by the venom gland.

It localises to the secreted. The catalysed reaction is an N-(acyl)-sphingosylphosphocholine = an N-(acyl)-sphingosyl-1,3-cyclic phosphate + choline. It carries out the reaction an N-(acyl)-sphingosylphosphoethanolamine = an N-(acyl)-sphingosyl-1,3-cyclic phosphate + ethanolamine. The enzyme catalyses a 1-acyl-sn-glycero-3-phosphocholine = a 1-acyl-sn-glycero-2,3-cyclic phosphate + choline. It catalyses the reaction a 1-acyl-sn-glycero-3-phosphoethanolamine = a 1-acyl-sn-glycero-2,3-cyclic phosphate + ethanolamine. Dermonecrotic toxins cleave the phosphodiester linkage between the phosphate and headgroup of certain phospholipids (sphingolipid and lysolipid substrates), forming an alcohol (often choline) and a cyclic phosphate. This toxin acts on sphingomyelin (SM) (228.2 U/mg). It may also act on ceramide phosphoethanolamine (CPE), lysophosphatidylcholine (LPC) and lysophosphatidylethanolamine (LPE), but not on lysophosphatidylserine (LPS), and lysophosphatidylglycerol (LPG). It acts by transphosphatidylation, releasing exclusively cyclic phosphate products as second products. Induces dermonecrosis, hemolysis, increased vascular permeability, edema, inflammatory response, and platelet aggregation. Is lethal to mice. This is Dermonecrotic toxin LlSicTox-alphaIII2 from Loxosceles laeta (South American recluse spider).